Consider the following 388-residue polypeptide: Succinate--CoA ligase [ADP-forming] subunit beta (388 aa).

Positions 9–245 (KELLASYGLP…KSQENERELK (237 aa)) constitute an ATP-grasp domain. ATP contacts are provided by residues Lys-46, 53–55 (GRG), Glu-100, Tyr-103, and Glu-108. Positions 200 and 214 each coordinate Mg(2+). Residues Asn-265 and 322-324 (GIV) each bind substrate.

Belongs to the succinate/malate CoA ligase beta subunit family. In terms of assembly, heterotetramer of two alpha and two beta subunits. Mg(2+) is required as a cofactor.

It catalyses the reaction succinate + ATP + CoA = succinyl-CoA + ADP + phosphate. It carries out the reaction GTP + succinate + CoA = succinyl-CoA + GDP + phosphate. Its pathway is carbohydrate metabolism; tricarboxylic acid cycle; succinate from succinyl-CoA (ligase route): step 1/1. In terms of biological role, succinyl-CoA synthetase functions in the citric acid cycle (TCA), coupling the hydrolysis of succinyl-CoA to the synthesis of either ATP or GTP and thus represents the only step of substrate-level phosphorylation in the TCA. The beta subunit provides nucleotide specificity of the enzyme and binds the substrate succinate, while the binding sites for coenzyme A and phosphate are found in the alpha subunit. The protein is Succinate--CoA ligase [ADP-forming] subunit beta of Neisseria gonorrhoeae (strain ATCC 700825 / FA 1090).